The sequence spans 881 residues: Valine--tRNA ligase (881 aa).

The 'HIGH' region motif lies at 49–59; sequence PNVTGKLHLGH. Residues 526–530 carry the 'KMSKS' region motif; the sequence is KMSKS. Lys529 contacts ATP. Residues 810–881 are a coiled coil; the sequence is LADLINLDEE…VRQRLADLEK (72 aa).

The protein belongs to the class-I aminoacyl-tRNA synthetase family. ValS type 1 subfamily. Monomer.

Its subcellular location is the cytoplasm. The enzyme catalyses tRNA(Val) + L-valine + ATP = L-valyl-tRNA(Val) + AMP + diphosphate. In terms of biological role, catalyzes the attachment of valine to tRNA(Val). As ValRS can inadvertently accommodate and process structurally similar amino acids such as threonine, to avoid such errors, it has a 'posttransfer' editing activity that hydrolyzes mischarged Thr-tRNA(Val) in a tRNA-dependent manner. The chain is Valine--tRNA ligase from Bacillus anthracis.